Reading from the N-terminus, the 229-residue chain is 2-C-methyl-D-erythritol 4-phosphate cytidylyltransferase (229 aa).

It belongs to the IspD/TarI cytidylyltransferase family. IspD subfamily.

The catalysed reaction is 2-C-methyl-D-erythritol 4-phosphate + CTP + H(+) = 4-CDP-2-C-methyl-D-erythritol + diphosphate. It functions in the pathway isoprenoid biosynthesis; isopentenyl diphosphate biosynthesis via DXP pathway; isopentenyl diphosphate from 1-deoxy-D-xylulose 5-phosphate: step 2/6. Its function is as follows. Catalyzes the formation of 4-diphosphocytidyl-2-C-methyl-D-erythritol from CTP and 2-C-methyl-D-erythritol 4-phosphate (MEP). The protein is 2-C-methyl-D-erythritol 4-phosphate cytidylyltransferase of Neisseria meningitidis serogroup C (strain 053442).